The chain runs to 103 residues: Histone H4 (103 aa).

A compositionally biased stretch (gly residues) spans Met1 to Gly14. The disordered stretch occupies residues Met1–Arg20. Ser2 bears the N-acetylserine mark. An N6-acetyl-N6-methyllysine; alternate mark is found at Lys6 and Lys13. Lys17 is subject to N6-acetyllysine. A DNA-binding region spans residues Lys17–Lys21. Lys21 carries the post-translational modification N6-methyllysine.

This sequence belongs to the histone H4 family. In terms of assembly, the nucleosome is a histone octamer containing two molecules each of H2A, H2B, H3 and H4 assembled in one H3-H4 heterotetramer and two H2A-H2B heterodimers. The octamer wraps approximately 147 bp of DNA.

It is found in the nucleus. It localises to the chromosome. Its function is as follows. Core component of nucleosome. Nucleosomes wrap and compact DNA into chromatin, limiting DNA accessibility to the cellular machineries which require DNA as a template. Histones thereby play a central role in transcription regulation, DNA repair, DNA replication and chromosomal stability. DNA accessibility is regulated via a complex set of post-translational modifications of histones, also called histone code, and nucleosome remodeling. The sequence is that of Histone H4 (H4DEKL) from Dendronephthya klunzingeri (Klunzinger's soft coral).